Here is a 622-residue protein sequence, read N- to C-terminus: Intermediate filament protein ifc-2 (622 aa).

The interval 19 to 54 (SGTYASGFGQLVSGMSSAGAICTTQIRDAREREKRE) is head. One can recognise an IF rod domain in the interval 51–399 (EKREIGLLND…ILLNGANVTT (349 aa)). Positions 55–86 (IGLLNDRLADYIEKVRFLEAQNRCLSHDIDIL) are coil 1A. The tract at residues 87–99 (RNGFSGGGHVSGL) is linker 1. A coil 1B region spans residues 100–237 (FDAEINQAKH…TENNVRIEQE (138 aa)). Residues 238-255 (LVFIRRDTTADNRDYFRH) form a linker 12 region. The coil 2 stretch occupies residues 256 to 399 (ELQAAIRDIR…ILLNGANVTT (144 aa)). Residues 400–550 (YTSNTHGSGS…RVDVGGFRIE (151 aa)) form a tail region. An LTD domain is found at 509-622 (SGRHFHSWYL…EERAWFVYLD (114 aa)).

Belongs to the intermediate filament family. Expressed in intestinal cells and at desmosomes in intestine and pharynx of the larva.

The protein localises to the cytoplasm. Its function is as follows. Cytoplasmic intermediate filaments provide mechanical strength to cells. Not essential protein, although its absence leads to mild defects in locomotion. The protein is Intermediate filament protein ifc-2 (ifc-2) of Caenorhabditis elegans.